The chain runs to 378 residues: Nucleosome assembly protein 1;1 (378 aa).

Residues valine 33–glutamate 87 are a coiled coil. Residues leucine 54 to glutamine 69 carry the Nuclear export signal motif. Residues lysine 230–lysine 235 carry the Nuclear localization signal motif. The disordered stretch occupies residues alanine 306–glutamine 378. Acidic residues predominate over residues glutamine 308–glutamate 344. The Nuclear localization signal signature appears at lysine 348–lysine 352. The segment covering lysine 356–glutamine 378 has biased composition (low complexity). Cysteine 375 is subject to Cysteine methyl ester. The S-farnesyl cysteine moiety is linked to residue cysteine 375. Positions lysine 376–glutamine 378 are cleaved as a propeptide — removed in mature form.

The protein belongs to the nucleosome assembly protein (NAP) family.

Its subcellular location is the nucleus. The protein resides in the cytoplasm. Its function is as follows. May modulate chromatin structure by regulation of nucleosome assembly/disassembly. The sequence is that of Nucleosome assembly protein 1;1 (NAP1;1) from Oryza sativa subsp. japonica (Rice).